Here is a 392-residue protein sequence, read N- to C-terminus: Formate-dependent phosphoribosylglycinamide formyltransferase (392 aa).

N(1)-(5-phospho-beta-D-ribosyl)glycinamide contacts are provided by residues 20–21 (EL) and Glu-80. Residues Arg-112, Lys-153, 158 to 163 (SSGKGQ), 193 to 196 (EGFV), and Glu-201 each bind ATP. An ATP-grasp domain is found at 117 to 306 (RLAAEELGLP…EFALHVRAIL (190 aa)). 2 residues coordinate Mg(2+): Glu-265 and Glu-277. N(1)-(5-phospho-beta-D-ribosyl)glycinamide is bound by residues Asp-284, Lys-355, and 362 to 363 (RR).

It belongs to the PurK/PurT family. Homodimer.

It catalyses the reaction N(1)-(5-phospho-beta-D-ribosyl)glycinamide + formate + ATP = N(2)-formyl-N(1)-(5-phospho-beta-D-ribosyl)glycinamide + ADP + phosphate + H(+). It functions in the pathway purine metabolism; IMP biosynthesis via de novo pathway; N(2)-formyl-N(1)-(5-phospho-D-ribosyl)glycinamide from N(1)-(5-phospho-D-ribosyl)glycinamide (formate route): step 1/1. Involved in the de novo purine biosynthesis. Catalyzes the transfer of formate to 5-phospho-ribosyl-glycinamide (GAR), producing 5-phospho-ribosyl-N-formylglycinamide (FGAR). Formate is provided by PurU via hydrolysis of 10-formyl-tetrahydrofolate. The polypeptide is Formate-dependent phosphoribosylglycinamide formyltransferase (Aeromonas salmonicida (strain A449)).